The primary structure comprises 440 residues: MREYNFDGLVGPTHNYGGLSPGNLASQSHVGEPSHPRDAALQGLEKMRFVSALGVGQAVLPPQPRPSLHALRALGFTGSDEEVITRAAREAEHLLRLTSSASSMWTANAATVAPSADTADGRVHLTPANLSQMYHRAIEAETTHSVLRAIFSNEKYFAVHAPLPGSGHFADEGAANHTRLATPGHAGVHLLAWGRSAWQDVQGPSRFPARQTLEASQALARLHQLDAKSVLFPQQHPEGIDAGAFHTDVLAVGNERFLMLHELAFVDHAGLLAVLREKLGQDFRAVVATKAELPAKDAVKAYPFNSQVLTLPDGTMAIVAPIESRETPAARQFLERVVAEDTPVKAVHYLDVRQSMNNGGGPACLRQRVWLTDEERGAIKADVFYTPALHDSLAGWVRRHYREVLRPKDLQDPQLARETMTALDELTRILNLGSVYDFQR.

Residues 17-26 (GGLSPGNLAS), N108, and 135-136 (HR) contribute to the substrate site. Residues 17-37 (GGLSPGNLASQSHVGEPSHPR) are disordered. Residue E172 is part of the active site. Residue R210 coordinates substrate. Residue H246 is part of the active site. Positions 248 and 358 each coordinate substrate. The active-site Nucleophile is C364.

The protein belongs to the succinylarginine dihydrolase family. As to quaternary structure, homodimer.

It catalyses the reaction N(2)-succinyl-L-arginine + 2 H2O + 2 H(+) = N(2)-succinyl-L-ornithine + 2 NH4(+) + CO2. It functions in the pathway amino-acid degradation; L-arginine degradation via AST pathway; L-glutamate and succinate from L-arginine: step 2/5. Catalyzes the hydrolysis of N(2)-succinylarginine into N(2)-succinylornithine, ammonia and CO(2). The polypeptide is N-succinylarginine dihydrolase (Myxococcus xanthus (strain DK1622)).